Consider the following 82-residue polypeptide: uncharacterized protein (82 aa).

3 helical membrane passes run 4 to 26 (IAVL…AGHF), 31 to 50 (FWVA…VTLA), and 55 to 77 (SFIF…TLFL).

It localises to the cell membrane. This is an uncharacterized protein from Bacillus subtilis (strain 168).